Consider the following 247-residue polypeptide: Probable transcriptional regulatory protein ECA2494 (247 aa).

Belongs to the TACO1 family.

The protein localises to the cytoplasm. This Pectobacterium atrosepticum (strain SCRI 1043 / ATCC BAA-672) (Erwinia carotovora subsp. atroseptica) protein is Probable transcriptional regulatory protein ECA2494.